The sequence spans 60 residues: Large ribosomal subunit protein uL30 (60 aa).

It belongs to the universal ribosomal protein uL30 family. As to quaternary structure, part of the 50S ribosomal subunit.

This Ralstonia pickettii (strain 12J) protein is Large ribosomal subunit protein uL30.